We begin with the raw amino-acid sequence, 288 residues long: Transposase InsF for insertion sequence IS3fB (288 aa).

The Integrase catalytic domain maps to 124-287 (YASGPNQKWA…SPEQFENQNL (164 aa)).

The protein belongs to the transposase IS3/IS150/IS904 family.

Its function is as follows. Involved in the transposition of the insertion sequence IS3. This is Transposase InsF for insertion sequence IS3fB (insF7) from Escherichia coli (strain K12).